A 577-amino-acid chain; its full sequence is Arginine--tRNA ligase (577 aa).

A 'HIGH' region motif is present at residues 122–132; the sequence is PNVAKEMHVGH.

The protein belongs to the class-I aminoacyl-tRNA synthetase family. In terms of assembly, monomer.

The protein localises to the cytoplasm. It catalyses the reaction tRNA(Arg) + L-arginine + ATP = L-arginyl-tRNA(Arg) + AMP + diphosphate. The chain is Arginine--tRNA ligase from Vibrio vulnificus (strain CMCP6).